A 609-amino-acid polypeptide reads, in one-letter code: Protein tesmin/TSO1-like CXC 3 (609 aa).

Basic and acidic residues predominate over residues 69–84; that stretch reads ESRFRSQKDVSASKEV. Disordered stretches follow at residues 69–102, 307–328, 457–477, and 569–609; these read ESRF…YKND, PISP…SSCK, LFEQ…KTQQ, and NSKR…TPHH. The CRC domain maps to 326–451; sequence SCKRCNCKKS…RCEGCKNAFG (126 aa). Polar residues predominate over residues 466 to 477; the sequence is TSGTPGTKKTQQ.

It belongs to the lin-54 family. As to expression, ubiquitous but expressed mostly in flowers and at significant levels in leaves. Detected with highest levels in developing ovules and microspores, and in petals.

The protein resides in the nucleus. Its function is as follows. Plays a role in development of both male and female reproductive tissues. The polypeptide is Protein tesmin/TSO1-like CXC 3 (TCX3) (Arabidopsis thaliana (Mouse-ear cress)).